The chain runs to 337 residues: Ribosomal RNA small subunit methyltransferase H (337 aa).

S-adenosyl-L-methionine contacts are provided by residues 35-37, D54, F81, D102, and Q109; that span reads GGY. Residues 286–316 are disordered; sequence PVGPSEAEAAANPRARSAKLRAGERTDAPAP. Positions 289-300 are enriched in low complexity; it reads PSEAEAAANPRA.

Belongs to the methyltransferase superfamily. RsmH family.

The protein resides in the cytoplasm. The catalysed reaction is cytidine(1402) in 16S rRNA + S-adenosyl-L-methionine = N(4)-methylcytidine(1402) in 16S rRNA + S-adenosyl-L-homocysteine + H(+). In terms of biological role, specifically methylates the N4 position of cytidine in position 1402 (C1402) of 16S rRNA. The polypeptide is Ribosomal RNA small subunit methyltransferase H (Methylobacterium sp. (strain 4-46)).